The primary structure comprises 367 residues: Glutamate 5-kinase (367 aa).

Lysine 9 contacts ATP. 3 residues coordinate substrate: serine 49, aspartate 136, and asparagine 148. Residues 168-169 and 210-216 contribute to the ATP site; these read TD and TGGMKSK. A PUA domain is found at 276–350; it reads SGQIEVDAGA…GMQSQDIQVR (75 aa).

It belongs to the glutamate 5-kinase family.

It is found in the cytoplasm. The enzyme catalyses L-glutamate + ATP = L-glutamyl 5-phosphate + ADP. It functions in the pathway amino-acid biosynthesis; L-proline biosynthesis; L-glutamate 5-semialdehyde from L-glutamate: step 1/2. Functionally, catalyzes the transfer of a phosphate group to glutamate to form L-glutamate 5-phosphate. The chain is Glutamate 5-kinase from Bacillus cereus (strain G9842).